The chain runs to 430 residues: Protein translocase subunit SecY (430 aa).

Helical transmembrane passes span 18–38 (IFFT…PAPG), 68–88 (FSIF…MQLL), 117–137 (FAII…NNYL), 147–167 (VMSY…LIWL), 174–194 (FGVG…TLPS), 217–237 (ILGL…VLEA), 270–290 (VIPV…TLFF), 308–328 (NIGM…YAFV), 368–388 (FVGS…TKFM), and 389–409 (GLPQ…GVAI).

It belongs to the SecY/SEC61-alpha family. In terms of assembly, component of the Sec protein translocase complex. Heterotrimer consisting of SecY, SecE and SecG subunits. The heterotrimers can form oligomers, although 1 heterotrimer is thought to be able to translocate proteins. Interacts with the ribosome. Interacts with SecDF, and other proteins may be involved. Interacts with SecA.

It localises to the cell membrane. In terms of biological role, the central subunit of the protein translocation channel SecYEG. Consists of two halves formed by TMs 1-5 and 6-10. These two domains form a lateral gate at the front which open onto the bilayer between TMs 2 and 7, and are clamped together by SecE at the back. The channel is closed by both a pore ring composed of hydrophobic SecY resides and a short helix (helix 2A) on the extracellular side of the membrane which forms a plug. The plug probably moves laterally to allow the channel to open. The ring and the pore may move independently. The polypeptide is Protein translocase subunit SecY (Staphylococcus epidermidis (strain ATCC 35984 / DSM 28319 / BCRC 17069 / CCUG 31568 / BM 3577 / RP62A)).